The chain runs to 806 residues: Mitogen-activated protein kinase 7 (806 aa).

A disordered region spans residues 1 to 23 (MAEPLKEEDGEDGSGEPPGRVKA). Ala2 carries the post-translational modification N-acetylalanine. The required for cytoplasmic targeting stretch occupies residues 2 to 77 (AEPLKEEDGE…VVSSARRRLT (76 aa)). One can recognise a Protein kinase domain in the interval 55–347 (YEIIETIGNG…AAAALRHPFL (293 aa)). ATP contacts are provided by residues 61 to 69 (IGNGAYGVV) and Lys84. The interval 78-139 (GQQVAIKKIP…FRSVYVVLDL (62 aa)) is required for binding to MAP2K5. Residues 140-406 (MESDLHQIIH…QQIRFQPSLQ (267 aa)) form a necessary for oligomerization region. The Proton acceptor role is filled by Asp182. Positions 219 to 221 (TEY) match the TXY motif. The tract at residues 407-806 (PVASEPVCPD…LSDLPDLQEP (400 aa)) is may not be required for kinase activity; required to stimulate MEF2C activity. Disordered stretches follow at residues 424–475 (APSG…SDNT) and 488–727 (RSRL…PKGS). Residues 433 to 443 (SPPPALPPCSG) show a composition bias toward pro residues. 3 stretches are compositionally biased toward basic and acidic residues: residues 502–519 (PEPR…EREE), 527–544 (RAKE…KERG), and 563–573 (DNDRSLLERWT). Residues 505-539 (RKPVTAQERQREREEKRRRRQERAKEREKRRQERE) carry the Nuclear localization signal motif. Composition is skewed to pro residues over residues 578–592 (PPVP…PTPK) and 627–643 (VCPP…PVPA). Positions 647–660 (TAPSTSLLASQSLV) are enriched in polar residues. The span at 678-689 (PSGPPPPDPGLT) shows a compositional bias: pro residues. A compositionally biased stretch (polar residues) spans 693–710 (STSESPDVNLVTQQLSKS). Ser710 is modified (phosphoserine). Thr723 carries the post-translational modification Phosphothreonine.

The protein belongs to the protein kinase superfamily. CMGC Ser/Thr protein kinase family. MAP kinase subfamily. As to quaternary structure, interacts with MAP2K5. Forms oligomers. Interacts with MEF2A, MEF2C and MEF2D; the interaction phosphorylates the MEF2s and enhances transcriptional activity of MEF2A, MEF2C but not MEF2D. Interacts with SGK1. Interacts with PML. Interacts (via N-terminal half) with HSP90AB1-CDC37 chaperone complex in resting cells; the interaction is MAP2K5-independent and prevents MAPK7 from ubiquitination and proteasomal degradation. Interacts with STUB1/CHIP; the interaction is enhanced in the presence of IGF1 or MAP2K5 and promotes STUB1/CHIP E3 ligase activity. Mg(2+) serves as cofactor. Dually phosphorylated on Thr-219 and Tyr-221, which activates the enzyme.

Its subcellular location is the cytoplasm. The protein resides in the nucleus. The protein localises to the PML body. The catalysed reaction is L-seryl-[protein] + ATP = O-phospho-L-seryl-[protein] + ADP + H(+). It catalyses the reaction L-threonyl-[protein] + ATP = O-phospho-L-threonyl-[protein] + ADP + H(+). With respect to regulation, activated by tyrosine and threonine phosphorylation. Activated in response to hyperosmolarity, hydrogen peroxide, and epidermal growth factor (EGF). Functionally, plays a role in various cellular processes such as proliferation, differentiation and cell survival. The upstream activator of MAPK7 is the MAPK kinase MAP2K5. Upon activation, it translocates to the nucleus and phosphorylates various downstream targets including MEF2C. EGF activates MAPK7 through a Ras-independent and MAP2K5-dependent pathway. As part of the MAPK/ERK signaling pathway, acts as a negative regulator of apoptosis in cardiomyocytes via interaction with STUB1/CHIP and promotion of STUB1-mediated ubiquitination and degradation of ICER-type isoforms of CREM. May have a role in muscle cell differentiation. May be important for endothelial function and maintenance of blood vessel integrity. MAP2K5 and MAPK7 interact specifically with one another and not with MEK1/ERK1 or MEK2/ERK2 pathways. Phosphorylates SGK1 at Ser-78 and this is required for growth factor-induced cell cycle progression. Involved in the regulation of p53/TP53 by disrupting the PML-MDM2 interaction. The sequence is that of Mitogen-activated protein kinase 7 (Mapk7) from Rattus norvegicus (Rat).